The sequence spans 284 residues: uncharacterized protein (284 aa).

One can recognise a Photolyase/cryptochrome alpha/beta domain in the interval 4-133 (PLHLFWHRRD…AVHRQWDQLL (130 aa)).

This is an uncharacterized protein from Synechococcus sp. (strain PCC 6716).